Reading from the N-terminus, the 630-residue chain is 1-deoxy-D-xylulose-5-phosphate synthase (630 aa).

Thiamine diphosphate is bound by residues His-72 and 113 to 115 (GHS). Asp-144 lines the Mg(2+) pocket. Thiamine diphosphate is bound by residues 145–146 (GA), Asn-173, Tyr-284, and Glu-367. Mg(2+) is bound at residue Asn-173.

Belongs to the transketolase family. DXPS subfamily. As to quaternary structure, homodimer. Requires Mg(2+) as cofactor. It depends on thiamine diphosphate as a cofactor.

The catalysed reaction is D-glyceraldehyde 3-phosphate + pyruvate + H(+) = 1-deoxy-D-xylulose 5-phosphate + CO2. The protein operates within metabolic intermediate biosynthesis; 1-deoxy-D-xylulose 5-phosphate biosynthesis; 1-deoxy-D-xylulose 5-phosphate from D-glyceraldehyde 3-phosphate and pyruvate: step 1/1. Functionally, catalyzes the acyloin condensation reaction between C atoms 2 and 3 of pyruvate and glyceraldehyde 3-phosphate to yield 1-deoxy-D-xylulose-5-phosphate (DXP). The polypeptide is 1-deoxy-D-xylulose-5-phosphate synthase (Bacillus cereus (strain AH820)).